A 151-amino-acid chain; its full sequence is Putative olfactory receptor 13C6 (151 aa).

Over 1–27 (MVSANQTASVTEFILLGLSAHPKLEKT) the chain is Extracellular. Asparagine 5 carries N-linked (GlcNAc...) asparagine glycosylation. Residues 28 to 48 (FFVLILLMYLVILLGNGVLIL) traverse the membrane as a helical segment. The Cytoplasmic portion of the chain corresponds to 49 to 61 (MTVSNSHLHMPMY). Residues 62–82 (FFLGNLSFLDICYTTSSVPLI) traverse the membrane as a helical segment. Residues 83 to 100 (LDSFLTPRKTISFSACAV) lie on the Extracellular side of the membrane. Residues 101–121 (QMFLSFAMGATECVLLSMMAF) form a helical membrane-spanning segment.

The protein belongs to the G-protein coupled receptor 1 family.

Its subcellular location is the cell membrane. Its function is as follows. Odorant receptor. In Homo sapiens (Human), this protein is Putative olfactory receptor 13C6.